The following is a 227-amino-acid chain: MSKLLLVDDDIELTELLSTLLELEGFDVETANNGLEALQKLNESYKLVLLDVMMPKLNGIETLKEIRKVSNVPVMMLTARGEDIDRVLGLELGADDCLPKPFNDRELIARIKAILRRSASPSNNISNVEILSFDGITLHFSHGIATYNEENLNLTDYEFKILCLLLKSKGNVVSREELSLEVMEKPLTPFDRSLDMHISNLRRKLPKRKNKPSWFKTLRGKGYALVT.

A Response regulatory domain is found at 3-115; the sequence is KLLLVDDDIE…ELIARIKAIL (113 aa). 4-aspartylphosphate is present on aspartate 51. The segment at residues 128-227 is a DNA-binding region (ompR/PhoB-type); it reads VEILSFDGIT…LRGKGYALVT (100 aa).

Post-translationally, phosphorylated.

Its subcellular location is the cytoplasm. Its function is as follows. Member of a two-component regulatory system. In Haemophilus influenzae (strain ATCC 51907 / DSM 11121 / KW20 / Rd), this protein is Transcriptional regulatory protein CpxR homolog (cpxR).